The primary structure comprises 186 residues: C-type lectin 37Da (186 aa).

An N-terminal signal peptide occupies residues 1–20 (MLKTLVQLFLVVAGFAPGFG). 2 N-linked (GlcNAc...) asparagine glycosylation sites follow: N35 and N47. The region spanning 46–169 (INESYYVFGQ…CHNHASSLFK (124 aa)) is the C-type lectin domain. A disulfide bridge connects residues C140 and C160.

The protein localises to the secreted. In terms of biological role, galactose-specific lectin that displays calcium-dependent activity. Binds to the surface of hemocytes and enhances hemocyte encapsulation and melanization. This is likely by interacting with carbohydrates on the surface of the hemocytes. Also displays agglutination activity against the Gram-negative bacterium E.coli. In Drosophila melanogaster (Fruit fly), this protein is C-type lectin 37Da.